The sequence spans 130 residues: Glycine cleavage system H protein (130 aa).

The region spanning 25-107 (IATIGITEFA…YGEGWFLKVR (83 aa)) is the Lipoyl-binding domain. An N6-lipoyllysine modification is found at lysine 66.

The protein belongs to the GcvH family. In terms of assembly, the glycine cleavage system is composed of four proteins: P, T, L and H. It depends on (R)-lipoate as a cofactor.

The glycine cleavage system catalyzes the degradation of glycine. The H protein shuttles the methylamine group of glycine from the P protein to the T protein. This is Glycine cleavage system H protein from Trichormus variabilis (strain ATCC 29413 / PCC 7937) (Anabaena variabilis).